The primary structure comprises 73 residues: Omega-conotoxin CVID (73 aa).

A signal peptide spans 1-22; the sequence is MKLTCVVIVAVLLLTACQLITA. The propeptide occupies 23–45; that stretch reads DDSRGTQKHRALRSDTKLSMSTR. Cystine bridges form between cysteine 46-cysteine 61, cysteine 53-cysteine 65, and cysteine 60-cysteine 72. Position 72 is a cysteine amide (cysteine 72).

Belongs to the conotoxin O1 superfamily. In terms of tissue distribution, expressed by the venom duct.

Its subcellular location is the secreted. Omega-conotoxins act at presynaptic membranes, they bind and block voltage-gated calcium channels. This toxin inhibits neurotransmitter release, it blocks N-type calcium channels, probably a N-type (Cav2.2/CACNA1B) calcium channel variant. This is Omega-conotoxin CVID from Conus catus (Cat cone).